We begin with the raw amino-acid sequence, 318 residues long: MVGYDAKADVRSNSKLEVAVAGSVSGFVTRALISPLDVIKIRFQLQIERLCPSDPNAKYHGIFQAAKQILQEEGPRAFWKGHVPAQILSIGYGAVQFLAFEELTELLYQANLYQTHQFSAHFVCGGLSAGTATLTVHPVDVLRTRLAAQGEPKIYNNLREAIRTMYKTEGPFVFYKGLTPTVIAIFPYAGLQFSCYRSLKRAYDWLIPPDGKQTGNLKNLLCGCGSGVISKTFTYPLDLIKKRLQVGGFEHARSAFGQVRSYRGLLDLTQQVLQEEGTRGFFKGLSPSLMKAALSTGFMFFWYELFCNLFHCIRREDR.

Solcar repeat units lie at residues 13–106 (NSKL…LTEL), 116–202 (HQFS…LKRA), and 214–309 (TGNL…FCNL). A run of 5 helical transmembrane segments spans residues 19–39 (AVAG…LDVI), 87–107 (ILSI…TELL), 122–142 (FVCG…VDVL), 173–193 (VFYK…GLQF), and 220–240 (LLCG…LDLI). Residues 241 to 246 (KKRLQV) carry the Substrate recognition motif. The helical transmembrane segment at 293–313 (ALSTGFMFFWYELFCNLFHCI) threads the bilayer.

This sequence belongs to the mitochondrial carrier (TC 2.A.29) family.

It localises to the mitochondrion membrane. It carries out the reaction thiamine phosphate(out) + thiamine diphosphate(in) = thiamine phosphate(in) + thiamine diphosphate(out). Its function is as follows. Mitochondrial transporter mediating uptake of thiamine diphosphate into mitochondria. It is not clear if the antiporter activity is affected by the membrane potential or by the proton electrochemical gradient. The sequence is that of Mitochondrial thiamine pyrophosphate carrier (Slc25a19) from Mus musculus (Mouse).